A 355-amino-acid polypeptide reads, in one-letter code: Uroporphyrinogen decarboxylase (355 aa).

Substrate contacts are provided by residues arginine 27 to arginine 31, aspartate 77, tyrosine 154, threonine 209, and histidine 328.

This sequence belongs to the uroporphyrinogen decarboxylase family. Homodimer.

It is found in the cytoplasm. The enzyme catalyses uroporphyrinogen III + 4 H(+) = coproporphyrinogen III + 4 CO2. It participates in porphyrin-containing compound metabolism; protoporphyrin-IX biosynthesis; coproporphyrinogen-III from 5-aminolevulinate: step 4/4. Its function is as follows. Catalyzes the decarboxylation of four acetate groups of uroporphyrinogen-III to yield coproporphyrinogen-III. This is Uroporphyrinogen decarboxylase from Photobacterium profundum (strain SS9).